A 294-amino-acid polypeptide reads, in one-letter code: Cytidine deaminase (294 aa).

CMP/dCMP-type deaminase domains lie at 48 to 168 (DEDA…FGPK) and 186 to 294 (LTGD…VLLA). 89–91 (NME) contacts substrate. Residue histidine 102 participates in Zn(2+) binding. Glutamate 104 serves as the catalytic Proton donor. Zn(2+)-binding residues include cysteine 129 and cysteine 132.

It belongs to the cytidine and deoxycytidylate deaminase family. As to quaternary structure, homodimer. It depends on Zn(2+) as a cofactor.

The enzyme catalyses cytidine + H2O + H(+) = uridine + NH4(+). It catalyses the reaction 2'-deoxycytidine + H2O + H(+) = 2'-deoxyuridine + NH4(+). Its function is as follows. This enzyme scavenges exogenous and endogenous cytidine and 2'-deoxycytidine for UMP synthesis. This Escherichia coli O17:K52:H18 (strain UMN026 / ExPEC) protein is Cytidine deaminase.